The sequence spans 443 residues: Nuclear hormone receptor family member nhr-60 (443 aa).

The span at M1–S20 shows a compositional bias: low complexity. The segment at M1–K40 is disordered. A DNA-binding region (nuclear receptor) is located at residues P44–V121. NR C4-type zinc fingers lie at residues C47–C67 and C83–C104. The 244-residue stretch at N196 to D439 folds into the NR LBD domain. Residues L225–H249 are disordered. Residues P233–G242 are compositionally biased toward pro residues.

This sequence belongs to the nuclear hormone receptor family.

It is found in the nucleus. Orphan nuclear receptor (Potential). Required for embryonic and larval morphogenesis and probably for seam cell positioning and migration. The sequence is that of Nuclear hormone receptor family member nhr-60 from Caenorhabditis elegans.